A 286-amino-acid chain; its full sequence is Gap junction alpha-6 protein (286 aa).

The Cytoplasmic segment spans residues 1-23 (MSDWSALHQLLEKVQPYSTAGGK). A helical transmembrane segment spans residues 24–41 (VWIKVLFIFRILLLGTAI). Residues 42 to 76 (ESAWSDEQFEFHCNTQQPGCENVCYDQAFPISHVR) lie on the Extracellular side of the membrane. The chain crosses the membrane as a helical span at residues 77–99 (LWVLQVIFVSVPTLLHLAHVYYV). Topologically, residues 100-151 (IRQNEKLKKQEEEELKVAHFNGASGERRLQKHTGKHIKCGSKEHGNRKMRGR) are cytoplasmic. The chain crosses the membrane as a helical span at residues 152 to 174 (LLLTYMASIFFKSVFEVAFLLIQ). The Extracellular portion of the chain corresponds to 175–209 (WYLYGFTLSAVYICEQSPCPHRVDCFLSRPTEKTI). The helical transmembrane segment at 210–232 (FILFMLVVSMVSFVLNVIELFYV) threads the bilayer. The Cytoplasmic segment spans residues 233-286 (LFKAIKNHLGNEKEEVYCNPVELQKPSCVSSSAVLTTICSSDQVVPVGLSSFYM).

It belongs to the connexin family. Alpha-type (group II) subfamily. As to quaternary structure, a connexon is composed of a hexamer of connexins. As to expression, expressed in testis.

Its subcellular location is the cell membrane. The protein resides in the cell junction. It is found in the gap junction. Functionally, one gap junction consists of a cluster of closely packed pairs of transmembrane channels, the connexons, through which materials of low MW diffuse from one cell to a neighboring cell. This chain is Gap junction alpha-6 protein (Gja6), found in Rattus norvegicus (Rat).